Here is a 129-residue protein sequence, read N- to C-terminus: ALK and LTK ligand 1 (129 aa).

The first 27 residues, methionine 1–glycine 27, serve as a signal peptide directing secretion. Residues glycine 24–alanine 63 are disordered. Positions alanine 25–alanine 35 are enriched in basic residues. Disulfide bonds link cysteine 90/cysteine 126 and cysteine 104/cysteine 113.

The protein belongs to the ALKAL family. In terms of tissue distribution, widely expressed with highest levels in thyroid and moderate levels in stomach, trachea, small intestine, prostate and brain.

It localises to the secreted. It is found in the cell membrane. Its function is as follows. Cytokine that acts as a physiological ligand for receptor tyrosine kinase LTK, leading to its activation. Monomeric ALKAL1 binds to LTK, leading to LTK homodimerization and activation. In contrast to ALKAL2, does not act as a potent physiological ligand for ALK. The sequence is that of ALK and LTK ligand 1 from Homo sapiens (Human).